We begin with the raw amino-acid sequence, 117 residues long: Protein Wnt-6 (117 aa).

S1 is lipidated: O-palmitoleoyl serine; by PORCN. A disulfide bridge links C83 with C98. Residue N84 is glycosylated (N-linked (GlcNAc...) asparagine).

It belongs to the Wnt family. Post-translationally, palmitoleoylation is required for efficient binding to frizzled receptors. Depalmitoleoylation leads to Wnt signaling pathway inhibition.

It is found in the secreted. Its subcellular location is the extracellular space. It localises to the extracellular matrix. Its function is as follows. Ligand for members of the frizzled family of seven transmembrane receptors. Probable developmental protein. May be a signaling molecule which affects the development of discrete regions of tissues. Is likely to signal over only few cell diameters. The sequence is that of Protein Wnt-6 (WNT-6) from Evasterias troschelii (Mottled sea star).